Here is a 126-residue protein sequence, read N- to C-terminus: Large ribosomal subunit protein bL19 (126 aa).

This sequence belongs to the bacterial ribosomal protein bL19 family.

In terms of biological role, this protein is located at the 30S-50S ribosomal subunit interface and may play a role in the structure and function of the aminoacyl-tRNA binding site. This Gluconacetobacter diazotrophicus (strain ATCC 49037 / DSM 5601 / CCUG 37298 / CIP 103539 / LMG 7603 / PAl5) protein is Large ribosomal subunit protein bL19.